A 509-amino-acid chain; its full sequence is DEAD-box ATP-dependent RNA helicase CshA (509 aa).

The Q motif signature appears at 2-30; sequence QNFKELGISDKTVQTLEAMGFKEPTPIQK. Positions 33-203 constitute a Helicase ATP-binding domain; it reads IPYALEGDDI…QQFMKAPKII (171 aa). Residue 46–53 coordinates ATP; that stretch reads AQTGTGKT. Residues 150-153 carry the DEAD box motif; sequence DEAD. Residues 214 to 375 form the Helicase C-terminal domain; the sequence is QIDEYYTIVK…LRPPHRKEVL (162 aa). 2 stretches are compositionally biased toward basic residues: residues 440–459 and 467–482; these read ARKNRSSKGGSRRSNHKRGN and RRSKGSKGQSSKKKNQ. Residues 440–509 are disordered; sequence ARKNRSSKGG…KGRTFADHQK (70 aa). Residues 483–492 show a composition bias toward basic and acidic residues; it reads KKFDRRDKQQ.

The protein belongs to the DEAD box helicase family. CshA subfamily. As to quaternary structure, oligomerizes, may be a member of the RNA degradosome.

It is found in the cytoplasm. The catalysed reaction is ATP + H2O = ADP + phosphate + H(+). In terms of biological role, DEAD-box RNA helicase possibly involved in RNA degradation. Unwinds dsRNA in both 5'- and 3'-directions, has RNA-dependent ATPase activity. The chain is DEAD-box ATP-dependent RNA helicase CshA from Staphylococcus epidermidis (strain ATCC 12228 / FDA PCI 1200).